Here is a 357-residue protein sequence, read N- to C-terminus: Peptide chain release factor 1 (357 aa).

Residue Q234 is modified to N5-methylglutamine. Residues 249 to 308 (PSGVEVSCQDEKSQHKNRSKAMRVLRSRVYEKKREEQQAEREEARRSMVGSGDRSAKIRT) are disordered. Residues 263–274 (HKNRSKAMRVLR) show a composition bias toward basic residues. Residues 276–294 (RVYEKKREEQQAEREEARR) show a composition bias toward basic and acidic residues.

It belongs to the prokaryotic/mitochondrial release factor family. In terms of processing, methylated by PrmC. Methylation increases the termination efficiency of RF1.

The protein localises to the cytoplasm. Its function is as follows. Peptide chain release factor 1 directs the termination of translation in response to the peptide chain termination codons UAG and UAA. This chain is Peptide chain release factor 1, found in Salinibacter ruber (strain DSM 13855 / M31).